Here is a 245-residue protein sequence, read N- to C-terminus: Phycocyanobilin:ferredoxin oxidoreductase (245 aa).

This sequence belongs to the HY2 family.

It carries out the reaction (2R,3Z)-phycocyanobilin + 4 oxidized [2Fe-2S]-[ferredoxin] = biliverdin IXalpha + 4 reduced [2Fe-2S]-[ferredoxin] + 4 H(+). Functionally, catalyzes the four-electron reduction of biliverdin IX-alpha (2-electron reduction at both the A and D rings); the reaction proceeds via an isolatable 2-electron intermediate, 181,182-dihydrobiliverdin. This Rippkaea orientalis (strain PCC 8801 / RF-1) (Cyanothece sp. (strain PCC 8801)) protein is Phycocyanobilin:ferredoxin oxidoreductase.